A 416-amino-acid chain; its full sequence is Adenylosuccinate synthetase (416 aa).

GTP is bound by residues 13–19 (GDEGKGK) and 41–43 (GHT). Aspartate 14 serves as the catalytic Proton acceptor. Mg(2+) contacts are provided by aspartate 14 and glycine 41. Residues 14 to 17 (DEGK), 39 to 42 (NAGH), threonine 126, arginine 140, glutamine 220, threonine 235, and arginine 299 contribute to the IMP site. The Proton donor role is filled by histidine 42. Residue 295-301 (TTTGRPR) participates in substrate binding. Residues arginine 301, 327–329 (KLD), and 405–407 (STS) each bind GTP.

It belongs to the adenylosuccinate synthetase family. Homodimer. The cofactor is Mg(2+).

It is found in the cytoplasm. It catalyses the reaction IMP + L-aspartate + GTP = N(6)-(1,2-dicarboxyethyl)-AMP + GDP + phosphate + 2 H(+). Its pathway is purine metabolism; AMP biosynthesis via de novo pathway; AMP from IMP: step 1/2. Plays an important role in the de novo pathway of purine nucleotide biosynthesis. Catalyzes the first committed step in the biosynthesis of AMP from IMP. The chain is Adenylosuccinate synthetase from Sulfurovum sp. (strain NBC37-1).